The primary structure comprises 256 residues: uncharacterized protein (256 aa).

An N-terminal signal peptide occupies residues 1-22 (MGYLKRIGMCISLLIVIIFVTS). C23 carries N-palmitoyl cysteine lipidation. C23 is lipidated: S-diacylglycerol cysteine.

This sequence belongs to the staphylococcal tandem lipoprotein family.

Its subcellular location is the cell membrane. This is an uncharacterized protein from Staphylococcus aureus (strain MRSA252).